Here is a 367-residue protein sequence, read N- to C-terminus: Putative 12-oxophytodienoate reductase 11 (367 aa).

FMN contacts are provided by residues 26–28, alanine 59, and glutamine 101; that span reads PLT. 178–181 is a substrate binding site; the sequence is HGAH. Tyrosine 183 serves as the catalytic Proton donor. Arginine 230 contacts FMN. Position 270 (arginine 270) interacts with substrate. FMN is bound by residues glycine 300 and 321–322; that span reads GR.

The protein belongs to the NADH:flavin oxidoreductase/NADH oxidase family. Requires FMN as cofactor.

Its function is as follows. Putative oxophytodienoate reductase that may be involved in the biosynthesis or metabolism of oxylipin signaling molecules. The sequence is that of Putative 12-oxophytodienoate reductase 11 (OPR11) from Oryza sativa subsp. japonica (Rice).